Reading from the N-terminus, the 319-residue chain is MELKNHKKIIILGSGPAGYTAAIYSSRANLNPLLITGINKGGQLMNTNEIENWPGDFKKITGPELMNRMHEHSLKFKTEIVYDNIISVEFKKKPFFLLGEYNKYTCDAVIIATGANPRYLGLSSENKFKGKGISTCAVCDGFFYKNKEIAVVGGGNTAIEETLYLSNFVKKIYLIHRRNNFKAEKILIDRLLKIVKTKKVILHLNSTIEDILGNNKGVTHLLIKNKNLKEKKKLKIAVSGLFVAIGYIPNTDIFTDQLKMKDGYIKIKKGTHGNYTQTNIPGVFAAGDVIDHVYRQAITSSASGCMAALDSERYLNSLS.

36-43 lines the FAD pocket; it reads TGINKGGQ. Cys136 and Cys139 are joined by a disulfide. FAD is bound at residue 288 to 297; that stretch reads DVIDHVYRQA.

Belongs to the class-II pyridine nucleotide-disulfide oxidoreductase family. Homodimer. It depends on FAD as a cofactor.

It is found in the cytoplasm. The enzyme catalyses [thioredoxin]-dithiol + NADP(+) = [thioredoxin]-disulfide + NADPH + H(+). The chain is Thioredoxin reductase (trxB) from Buchnera aphidicola subsp. Schizaphis graminum (strain Sg).